The primary structure comprises 95 residues: Co-chaperonin GroES (95 aa).

A disordered region spans residues 36–55 (QEGEVVAVGSGKTLDDGSKV).

The protein belongs to the GroES chaperonin family. Heptamer of 7 subunits arranged in a ring. Interacts with the chaperonin GroEL.

Its subcellular location is the cytoplasm. Together with the chaperonin GroEL, plays an essential role in assisting protein folding. The GroEL-GroES system forms a nano-cage that allows encapsulation of the non-native substrate proteins and provides a physical environment optimized to promote and accelerate protein folding. GroES binds to the apical surface of the GroEL ring, thereby capping the opening of the GroEL channel. In Natranaerobius thermophilus (strain ATCC BAA-1301 / DSM 18059 / JW/NM-WN-LF), this protein is Co-chaperonin GroES.